The following is a 201-amino-acid chain: Ran-specific GTPase-activating protein (201 aa).

Positions 1–26 (MAAAKDTHEDHDTSTENTDESNHDPQ) are enriched in basic and acidic residues. The tract at residues 1-35 (MAAAKDTHEDHDTSTENTDESNHDPQFEPIVSLPE) is disordered. Position 2 is an N-acetylalanine (alanine 2). 2 positions are modified to phosphothreonine: threonine 13 and threonine 18. Phosphoserine is present on residues serine 21 and serine 60. The region spanning 26–164 (QFEPIVSLPE…FEECRKEIEE (139 aa)) is the RanBD1 domain. Lysine 150 bears the N6-acetyllysine; alternate mark. Lysine 150 carries the N6-succinyllysine; alternate modification. The disordered stretch occupies residues 163–201 (EEREKKAGSGKNDHAEKVAEKLEALSVKEETKEDAEEKQ). Position 183 is an N6-acetyllysine (lysine 183). Phosphoserine is present on serine 188. Lysine 190 participates in a covalent cross-link: Glycyl lysine isopeptide (Lys-Gly) (interchain with G-Cter in SUMO2).

It belongs to the RANBP1 family. Interacts with RAN (via C-terminus of GTP-bound form) but not with GDP-bound RAN. Identified in a complex composed of RAN, RANGAP1 and RANBP1. Identified in a complex that contains TNPO1, RAN and RANBP1. Identified in a complex that contains CSE1L, KPNA2, RAN and RANBP1. Identified in a complex with nucleotide-free RAN and RCC1.

In terms of biological role, plays a role in RAN-dependent nucleocytoplasmic transport. Alleviates the TNPO1-dependent inhibition of RAN GTPase activity and mediates the dissociation of RAN from proteins involved in transport into the nucleus. Induces a conformation change in the complex formed by XPO1 and RAN that triggers the release of the nuclear export signal of cargo proteins. Promotes the disassembly of the complex formed by RAN and importin beta. Promotes dissociation of RAN from a complex with KPNA2 and CSE1L. Required for normal mitotic spindle assembly and normal progress through mitosis via its effect on RAN. Does not increase the RAN GTPase activity by itself, but increases GTP hydrolysis mediated by RANGAP1. Inhibits RCC1-dependent exchange of RAN-bound GDP by GTP. The protein is Ran-specific GTPase-activating protein (RANBP1) of Homo sapiens (Human).